The chain runs to 508 residues: Photosystem II CP47 reaction center protein (508 aa).

6 helical membrane-spanning segments follow: residues 21–36, 101–115, 140–156, 203–218, 237–252, and 457–472; these read AVHIMHTALVSGWAGS, IVFSGLCFLAAIWHW, GIHLFLAGVACFGFGAF, IAAGTLGILAGLFHLS, VLSSSIAAVFFAAFVV, and TFALLFFFGHIWHGAR.

This sequence belongs to the PsbB/PsbC family. PsbB subfamily. As to quaternary structure, PSII is composed of 1 copy each of membrane proteins PsbA, PsbB, PsbC, PsbD, PsbE, PsbF, PsbH, PsbI, PsbJ, PsbK, PsbL, PsbM, PsbT, PsbX, PsbY, PsbZ, Psb30/Ycf12, at least 3 peripheral proteins of the oxygen-evolving complex and a large number of cofactors. It forms dimeric complexes. Binds multiple chlorophylls. PSII binds additional chlorophylls, carotenoids and specific lipids. is required as a cofactor.

It localises to the plastid. The protein resides in the chloroplast thylakoid membrane. Its function is as follows. One of the components of the core complex of photosystem II (PSII). It binds chlorophyll and helps catalyze the primary light-induced photochemical processes of PSII. PSII is a light-driven water:plastoquinone oxidoreductase, using light energy to abstract electrons from H(2)O, generating O(2) and a proton gradient subsequently used for ATP formation. This chain is Photosystem II CP47 reaction center protein, found in Secale cereale (Rye).